The chain runs to 632 residues: Probable membrane transporter protein MamO (632 aa).

A helical transmembrane segment spans residues 25–45 (APVSILAFLILVTFAWGAYLL). Residues 78-268 (LYYTVPPAVV…VIVSHLQDVV (191 aa)) form a protease-like region. A divalent metal cation contacts are provided by His148 and His263. 7 consecutive transmembrane segments (helical) span residues 340-360 (IGGYSIADILGLGMLALAAGV), 412-432 (LVQWDKVKPLIPWGVAGVVIG), 434-454 (FIGNAIGDSVVGVLLGLFALI), 513-533 (AVLGLPMGLFSGILGISGGVI), 550-570 (IANSSVLVFWASVAGSVVAFI), 582-602 (APVTLALVMIPGAYVGGILGA), and 612-632 (VLKGIYAATMAAIAIKMLTTV). The TSUP-like stretch occupies residues 365 to 632 (MTMGGGVLQV…AIAIKMLTTV (268 aa)).

In the N-terminal section; belongs to the peptidase S1C family. The protein in the C-terminal section; belongs to the 4-toluene sulfonate uptake permease (TSUP) (TC 2.A.102) family. It depends on a metal cation as a cofactor. Subject to proteolytic cleavage by MamE.

It localises to the magnetosome membrane. In terms of biological role, plays 2 roles; promotes magnetite nucleation/formation and activates the MamE protease. Despite its near conservation of a protease-like sequence, this is probably not a protease. Required in conjunction with MamP for proteolysis of at least MamE, itself and MamP. May transport a solute that controls MamE's protease activity. May place individual iron atoms into the magnetite lattice. One of 7 genes (mamLQBIEMO) able to induce magnetosome membrane biogenesis; coexpression of mamLQRBIEMO in a deletion of the 17 gene mamAB operon restores magnetosome vesicle formation but not magnetite biosynthesis. The chain is Probable membrane transporter protein MamO from Magnetospirillum gryphiswaldense (strain DSM 6361 / JCM 21280 / NBRC 15271 / MSR-1).